Here is a 481-residue protein sequence, read N- to C-terminus: 2-succinylbenzoate--CoA ligase (481 aa).

The protein belongs to the ATP-dependent AMP-binding enzyme family. MenE subfamily.

The enzyme catalyses 2-succinylbenzoate + ATP + CoA = 2-succinylbenzoyl-CoA + AMP + diphosphate. It functions in the pathway quinol/quinone metabolism; 1,4-dihydroxy-2-naphthoate biosynthesis; 1,4-dihydroxy-2-naphthoate from chorismate: step 5/7. It participates in quinol/quinone metabolism; menaquinone biosynthesis. Converts 2-succinylbenzoate (OSB) to 2-succinylbenzoyl-CoA (OSB-CoA). This chain is 2-succinylbenzoate--CoA ligase, found in Bacillus cereus (strain Q1).